The chain runs to 501 residues: Putative matrix metalloproteinase (501 aa).

The signal sequence occupies residues 1 to 26 (MMPQYERKQIIIHISCVIICVVVTLT). 6 N-linked (GlcNAc...) asparagine; by host glycosylation sites follow: N48, N58, N61, N94, N116, and N163. A Zn(2+)-binding site is contributed by H179. E180 is a catalytic residue. Positions 183 and 189 each coordinate Zn(2+). N-linked (GlcNAc...) asparagine; by host glycosylation is found at N192, N267, N280, and N291. The stretch at 311–356 (TGHIDTISVIRGELYIFVDEYHWRFRSNGLLYSGYPLKTTHSWSVP) is one Hemopexin repeat. N-linked (GlcNAc...) asparagine; by host glycosylation is found at N379 and N493.

This sequence belongs to the peptidase M10A family. Requires Zn(2+) as cofactor.

The chain is Putative matrix metalloproteinase from Trichoplusia ni ascovirus 2c (TnAV-2c).